We begin with the raw amino-acid sequence, 393 residues long: Phosphoglycerate kinase (393 aa).

Substrate is bound by residues 21–23 (DLN), Arg36, 59–62 (HLGR), Arg113, and Arg146. ATP is bound by residues Lys197, Glu319, and 345–348 (GGDT).

Belongs to the phosphoglycerate kinase family. Monomer.

Its subcellular location is the cytoplasm. It carries out the reaction (2R)-3-phosphoglycerate + ATP = (2R)-3-phospho-glyceroyl phosphate + ADP. Its pathway is carbohydrate degradation; glycolysis; pyruvate from D-glyceraldehyde 3-phosphate: step 2/5. This chain is Phosphoglycerate kinase, found in Nitratidesulfovibrio vulgaris (strain DSM 19637 / Miyazaki F) (Desulfovibrio vulgaris).